The sequence spans 470 residues: Glutamate--tRNA ligase (470 aa).

The short motif at 9–19 (PSPTGFLHVGG) is the 'HIGH' region element. A 'KMSKS' region motif is present at residues 236–240 (RLSKR). Lysine 239 serves as a coordination point for ATP.

It belongs to the class-I aminoacyl-tRNA synthetase family. Glutamate--tRNA ligase type 1 subfamily. In terms of assembly, monomer.

Its subcellular location is the cytoplasm. The catalysed reaction is tRNA(Glu) + L-glutamate + ATP = L-glutamyl-tRNA(Glu) + AMP + diphosphate. Functionally, catalyzes the attachment of glutamate to tRNA(Glu) in a two-step reaction: glutamate is first activated by ATP to form Glu-AMP and then transferred to the acceptor end of tRNA(Glu). This is Glutamate--tRNA ligase from Legionella pneumophila (strain Corby).